Here is a 532-residue protein sequence, read N- to C-terminus: Chondroitin sulfate N-acetylgalactosaminyltransferase 1 (532 aa).

Residues 1 to 14 (MMMVRRGLLAWISR) lie on the Cytoplasmic side of the membrane. The chain crosses the membrane as a helical; Signal-anchor for type II membrane protein span at residues 15-35 (VVVLLVLLCCAISVLYMLACT). Topologically, residues 36–532 (PKGDEEQLAL…QKQKTSSKKT (497 aa)) are lumenal. Residues 57–100 (YQAVLQEWEEQHRNYVSSLKRQIAQLKEELQERSEQLRNGQYQA) adopt a coiled-coil conformation. Residues N315 and N324 are each glycosylated (N-linked (GlcNAc...) asparagine). Positions 360 and 477 each coordinate a divalent metal cation.

It belongs to the chondroitin N-acetylgalactosaminyltransferase family. Post-translationally, N-glycosylated. As to expression, ubiquitous, with the highest levels in placenta, thyroid, bladder, prostate and adrenal gland. Detected at low levels in the other tissues examined.

The protein resides in the golgi apparatus. It is found in the golgi stack membrane. It carries out the reaction 3-O-(beta-D-GlcA-(1-&gt;3)-beta-D-Gal-(1-&gt;3)-beta-D-Gal-(1-&gt;4)-beta-D-Xyl)-L-seryl-[protein] + UDP-N-acetyl-alpha-D-galactosamine = 3-O-(beta-D-GalNAc-(1-&gt;4)-beta-D-GlcA-(1-&gt;3)-beta-D-Gal-(1-&gt;3)-beta-D-Gal-(1-&gt;4)-beta-D-Xyl)-L-seryl-[protein] + UDP + H(+). Functionally, transfers 1,4-N-acetylgalactosamine (GalNAc) from UDP-GalNAc to the non-reducing end of glucuronic acid (GlcUA). Required for addition of the first GalNAc to the core tetrasaccharide linker and for elongation of chondroitin chains. Important role in chondroitin chain biosynthesis in cartilage formation and subsequent endochondral ossification. Moreover, is involved in the metabolism of aggrecan. This is Chondroitin sulfate N-acetylgalactosaminyltransferase 1 from Homo sapiens (Human).